A 100-amino-acid polypeptide reads, in one-letter code: UPF0213 protein YhbQ (100 aa).

One can recognise a GIY-YIG domain in the interval 2-77 (TPWFLYLIRT…KQLTKRQKER (76 aa)).

The protein belongs to the UPF0213 family.

The polypeptide is UPF0213 protein YhbQ (Escherichia coli O81 (strain ED1a)).